An 84-amino-acid chain; its full sequence is RNA-binding protein SAHV_0542 (84 aa).

The protein belongs to the eukaryotic ribosomal protein eL8 family.

The chain is RNA-binding protein SAHV_0542 from Staphylococcus aureus (strain Mu3 / ATCC 700698).